A 641-amino-acid chain; its full sequence is Threonine--tRNA ligase (641 aa).

One can recognise a TGS domain in the interval 1 to 61 (MIKISFFDNQ…KKNGNLEILT (61 aa)). The catalytic stretch occupies residues 240–538 (DHKKINKELD…LVEETKGVFP (299 aa)). 3 residues coordinate Zn(2+): cysteine 334, histidine 385, and histidine 515.

This sequence belongs to the class-II aminoacyl-tRNA synthetase family. As to quaternary structure, homodimer. Zn(2+) serves as cofactor.

It localises to the cytoplasm. It catalyses the reaction tRNA(Thr) + L-threonine + ATP = L-threonyl-tRNA(Thr) + AMP + diphosphate + H(+). Its function is as follows. Catalyzes the attachment of threonine to tRNA(Thr) in a two-step reaction: L-threonine is first activated by ATP to form Thr-AMP and then transferred to the acceptor end of tRNA(Thr). Also edits incorrectly charged L-seryl-tRNA(Thr). The protein is Threonine--tRNA ligase of Aster yellows witches'-broom phytoplasma (strain AYWB).